A 2495-amino-acid chain; its full sequence is Zinc finger protein 462 (2495 aa).

3 consecutive C2H2-type zinc fingers follow at residues 4–27 (LQCD…QDVH), 108–131 (FQCK…RKVH), and 162–185 (FSCQ…KMYH). K20 is covalently cross-linked (Glycyl lysine isopeptide (Lys-Gly) (interchain with G-Cter in SUMO1); alternate). Residue K20 forms a Glycyl lysine isopeptide (Lys-Gly) (interchain with G-Cter in SUMO2); alternate linkage. The segment at 215–241 (PCKELPAEVVERSILESMVKPLTKSRG) is interaction with PBX1. Residues K234 and K271 each participate in a glycyl lysine isopeptide (Lys-Gly) (interchain with G-Cter in SUMO2) cross-link. Disordered stretches follow at residues 278–301 (QQEG…NSTY), 329–357 (RPNS…NSGL), and 370–395 (DMTN…DLNE). A compositionally biased stretch (low complexity) spans 332–343 (SSSTSKFSSSMS). Residues K337, K348, and K350 each participate in a glycyl lysine isopeptide (Lys-Gly) (interchain with G-Cter in SUMO2) cross-link. Phosphoserine is present on residues S351 and S355. A compositionally biased stretch (polar residues) spans 370–387 (DMTNSSADLDTNSMLNDS). K429 is covalently cross-linked (Glycyl lysine isopeptide (Lys-Gly) (interchain with G-Cter in SUMO2)). 2 C2H2-type zinc fingers span residues 440 to 463 (FQCP…ENIH) and 471 to 493 (YKCD…KQCH). K485 participates in a covalent cross-link: Glycyl lysine isopeptide (Lys-Gly) (interchain with G-Cter in SUMO2). Positions 492–590 (CHTGTSDWDT…PQPPTQAPPL (99 aa)) are disordered. The segment covering 493 to 502 (HTGTSDWDTV) has biased composition (polar residues). Positions 503–515 (NSQSESLSSSLNE) are enriched in low complexity. Residues 542 to 590 (PPQPPPPLPPPPPPPSQPLPQPPPPPLQSPHQVPPPTQQPQPPTQAPPL) are compositionally biased toward pro residues. The segment at 593–616 (YKCTMCSYSTMTLKGLRVHQQHKH) adopts a C2H2-type 6 zinc-finger fold. Residues K624, K650, and K661 each participate in a glycyl lysine isopeptide (Lys-Gly) (interchain with G-Cter in SUMO2) cross-link. The tract at residues 629 to 654 (PSSLPLENETDSHPSSSNTVKKSQTS) is disordered. Over residues 641-654 (HPSSSNTVKKSQTS) the composition is skewed to polar residues. At S681 the chain carries Phosphoserine. K699 is covalently cross-linked (Glycyl lysine isopeptide (Lys-Gly) (interchain with G-Cter in SUMO2)). 3 consecutive C2H2-type zinc fingers follow at residues 835 to 858 (YYCK…QRMH), 878 to 900 (YRCL…YGEH), and 917 to 940 (YRCR…QRMH). Residue K978 forms a Glycyl lysine isopeptide (Lys-Gly) (interchain with G-Cter in SUMO2) linkage. A disordered region spans residues 980 to 999 (MATSTPVARGGGLPATFNKN). A C2H2-type 10 zinc finger spans residues 1023 to 1046 (YDCDVCSFASPNMHSVLVHYQKKH). S1083 is subject to Phosphoserine. K1128 is covalently cross-linked (Glycyl lysine isopeptide (Lys-Gly) (interchain with G-Cter in SUMO2)). Phosphoserine is present on S1159. Glycyl lysine isopeptide (Lys-Gly) (interchain with G-Cter in SUMO2) cross-links involve residues K1196, K1204, K1210, and K1232. 2 C2H2-type zinc fingers span residues 1254–1277 (LKCR…KKDH) and 1459–1482 (YQCT…GKKH). A Glycyl lysine isopeptide (Lys-Gly) (interchain with G-Cter in SUMO2) cross-link involves residue K1488. The C2H2-type 13 zinc-finger motif lies at 1504–1527 (YKCRHCPYINTRIHGVLTHYQKRH). Glycyl lysine isopeptide (Lys-Gly) (interchain with G-Cter in SUMO2) cross-links involve residues K1560 and K1580. C2H2-type zinc fingers lie at residues 1566–1589 (YRCK…EKYH), 1649–1672 (FRCQ…RIKH), and 1686–1709 (FKCA…QKRH). Glycyl lysine isopeptide (Lys-Gly) (interchain with G-Cter in SUMO2) cross-links involve residues K1687 and K1769. A C2H2-type 17 zinc finger spans residues 1881–1903 (FQCKHCDSKLQSIAELTSHLNIH). Residue K1935 forms a Glycyl lysine isopeptide (Lys-Gly) (interchain with G-Cter in SUMO2) linkage. The segment at 1957–1981 (YKCKFCVEVHPTLRAICNHLRKHVQ) adopts a C2H2-type 18; degenerate zinc-finger fold. The residue at position 1993 (K1993) is an N6-methyllysine. 3 consecutive C2H2-type zinc fingers follow at residues 2014 to 2037 (YSCQ…QTHH), 2043 to 2066 (FRCK…LKAH), and 2072 to 2095 (YKCS…LKVH). K2093 is covalently cross-linked (Glycyl lysine isopeptide (Lys-Gly) (interchain with G-Cter in SUMO2)). 2 stretches are compositionally biased toward polar residues: residues 2112–2121 (SHAHPSSQKA) and 2132–2149 (DSSY…NHYQ). The segment at 2112 to 2172 (SHAHPSSQKA…VPPSGTAAGT (61 aa)) is disordered. 2 positions are modified to phosphoserine: S2161 and S2166. 3 C2H2-type zinc fingers span residues 2180–2203 (LHCE…RDKH), 2209–2232 (FKCK…EAGH), and 2243–2265 (LRCP…IVLH). K2282 participates in a covalent cross-link: Glycyl lysine isopeptide (Lys-Gly) (interchain with G-Cter in SUMO2). C2H2-type zinc fingers lie at residues 2289–2311 (FRCD…IEKH) and 2317–2340 (YKCQ…RDEH). The interval 2361–2387 (KEKIESSSSEDEDKDDEMSSKAEDREL) is disordered. Positions 2377–2387 (EMSSKAEDREL) are enriched in basic and acidic residues. The C2H2-type 27 zinc finger occupies 2403–2425 (FPCEFCGRAFSQGSEWERHVLRH). Residue K2493 forms a Glycyl lysine isopeptide (Lys-Gly) (interchain with G-Cter in SUMO2) linkage.

As to quaternary structure, interacts with PBX1 isoform PBX1b; this interaction prevents PBX1-HOXA9 heterodimer from forming and binding to DNA. In terms of tissue distribution, expressed in the cerebral cortex (at protein level). Expressed in embryonic stem cells (at protein level). Expressed in heart, liver, kidney, muscle, and female and male genital tracts (at protein level).

Its subcellular location is the nucleus. Zinc finger nuclear factor involved in transcription by regulating chromatin structure and organization. Involved in the pluripotency and differentiation of embryonic stem cells by regulating SOX2, POU5F1/OCT4, and NANOG. By binding PBX1, prevents the heterodimerization of PBX1 and HOXA9 and their binding to DNA. Regulates neuronal development and neural cell differentiation. This Mus musculus (Mouse) protein is Zinc finger protein 462.